The sequence spans 158 residues: Probable cyclic pyranopterin monophosphate synthase (158 aa).

Substrate is bound by residues 78–80 and 114–115; these read MCH and ME. Asp-129 is an active-site residue.

It belongs to the MoaC family. As to quaternary structure, homohexamer; trimer of dimers.

The catalysed reaction is (8S)-3',8-cyclo-7,8-dihydroguanosine 5'-triphosphate = cyclic pyranopterin phosphate + diphosphate. The protein operates within cofactor biosynthesis; molybdopterin biosynthesis. Catalyzes the conversion of (8S)-3',8-cyclo-7,8-dihydroguanosine 5'-triphosphate to cyclic pyranopterin monophosphate (cPMP). This chain is Probable cyclic pyranopterin monophosphate synthase, found in Methanosarcina acetivorans (strain ATCC 35395 / DSM 2834 / JCM 12185 / C2A).